The primary structure comprises 480 residues: Glycogen synthase (480 aa).

An ADP-alpha-D-glucose-binding site is contributed by lysine 15.

The protein belongs to the glycosyltransferase 1 family. Bacterial/plant glycogen synthase subfamily.

It carries out the reaction [(1-&gt;4)-alpha-D-glucosyl](n) + ADP-alpha-D-glucose = [(1-&gt;4)-alpha-D-glucosyl](n+1) + ADP + H(+). It functions in the pathway glycan biosynthesis; glycogen biosynthesis. In terms of biological role, synthesizes alpha-1,4-glucan chains using ADP-glucose. The polypeptide is Glycogen synthase (Desulforamulus reducens (strain ATCC BAA-1160 / DSM 100696 / MI-1) (Desulfotomaculum reducens)).